The primary structure comprises 836 residues: Probable RING finger protein 207 homolog (836 aa).

An RING-type zinc finger spans residues 8–42 (CTICKNDFEEPILFSCQHTTCRKCSNGSPSCKTCS). The B box-type 1; atypical zinc finger occupies 68–115 (EEMEQCANCEQITLPMFYCETCQQSLCLACRNVTHQARMFSSHKIISS). The Zn(2+) site is built by Cys73, Cys76, Cys97, and His102. Residues 122 to 164 (YSSSLCKDHNEPYILYCSDVRKLVCIQCFNGRPLEERHSFISI) form a B box-type 2; degenerate zinc finger. Positions 527–557 (QNRIMAIEKEEENRRLNQEAKKKEELAGQSA) form a coiled coil. A compositionally biased stretch (basic and acidic residues) spans 540–552 (RRLNQEAKKKEEL). Residues 540-571 (RRLNQEAKKKEELAGQSAAMKSLKHGKTKRKE) form a disordered region. A compositionally biased stretch (basic residues) spans 561–571 (SLKHGKTKRKE).

The sequence is that of Probable RING finger protein 207 homolog from Caenorhabditis briggsae.